A 493-amino-acid polypeptide reads, in one-letter code: Cytoplasmic tRNA 2-thiolation protein 2 (493 aa).

Phosphoserine is present on Ser489.

Belongs to the CTU2/NCS2 family. Interacts with NCS6 and URM1. May act by forming a heterodimer with NCS6.

The protein localises to the cytoplasm. It participates in tRNA modification; 5-methoxycarbonylmethyl-2-thiouridine-tRNA biosynthesis. Plays a central role in 2-thiolation of mcm(5)S(2)U at tRNA wobble positions of tRNA(Lys), tRNA(Glu) and tRNA(Gln). May act by forming a heterodimer with NCS6 that ligates sulfur from thiocarboxylated URM1 onto the uridine of tRNAs at wobble position. Prior mcm(5) tRNA modification by the elongator complex is required for 2-thiolation. May also be involved in protein urmylation. The sequence is that of Cytoplasmic tRNA 2-thiolation protein 2 from Saccharomyces cerevisiae (strain AWRI1631) (Baker's yeast).